We begin with the raw amino-acid sequence, 702 residues long: Methionine--tRNA ligase (702 aa).

Residues 23 to 33 carry the 'HIGH' region motif; the sequence is PYANGPLHLGH. Residues cysteine 154, cysteine 157, cysteine 167, and cysteine 170 each coordinate Zn(2+). Residues 341–345 carry the 'KMSKS' region motif; sequence KMSKS. An ATP-binding site is contributed by lysine 344. Residues 562–593 form a disordered region; it reads LAPPPASAKQQNASMSNTAPPPTAEEPETTAP. Polar residues predominate over residues 569–578; the sequence is AKQQNASMSN. A tRNA-binding domain is found at 599–702; the sequence is DFAKLDLRIG…SSAQPGMPVR (104 aa).

The protein belongs to the class-I aminoacyl-tRNA synthetase family. MetG type 1 subfamily. As to quaternary structure, homodimer. Requires Zn(2+) as cofactor.

It is found in the cytoplasm. The enzyme catalyses tRNA(Met) + L-methionine + ATP = L-methionyl-tRNA(Met) + AMP + diphosphate. Is required not only for elongation of protein synthesis but also for the initiation of all mRNA translation through initiator tRNA(fMet) aminoacylation. This is Methionine--tRNA ligase from Xylella fastidiosa (strain M23).